A 245-amino-acid polypeptide reads, in one-letter code: Protein ARV 1 (245 aa).

Helical transmembrane passes span 70 to 90 (INPA…AYLL), 117 to 137 (IKVL…FAIA), 163 to 183 (IFLL…FVDI), 200 to 220 (TMTR…LVGQ), and 224 to 244 (PTIF…FFRI).

Belongs to the ARV1 family. In terms of tissue distribution, restricted to tissues in which cells are actively dividing or expanding. Mostly expressed in roots and flowers, and, to a lower extent, in stems and leaves.

Its subcellular location is the endoplasmic reticulum membrane. Functionally, mediator of sterol homeostasis involved in sterol uptake, trafficking and distribution into membranes. Also regulates the sphingolipid metabolism. This chain is Protein ARV 1, found in Arabidopsis thaliana (Mouse-ear cress).